The following is a 692-amino-acid chain: DNA topoisomerase 4 subunit B (692 aa).

ATP is bound by residues Y53, N93, D120, 162-168, and K393; that span reads GLHGVGI. The Toprim domain maps to 473–587; sequence AELFIVEGDS…AGHLYLAVPP (115 aa). The Mg(2+) site is built by E479, D552, and D554.

It belongs to the type II topoisomerase family. ParE type 1 subfamily. As to quaternary structure, heterotetramer composed of ParC and ParE. It depends on Mg(2+) as a cofactor. The cofactor is Mn(2+). Requires Ca(2+) as cofactor.

The catalysed reaction is ATP-dependent breakage, passage and rejoining of double-stranded DNA.. Its function is as follows. Topoisomerase IV is essential for chromosome segregation. It relaxes supercoiled DNA. Performs the decatenation events required during the replication of a circular DNA molecule. In Bartonella bacilliformis (strain ATCC 35685 / KC583 / Herrer 020/F12,63), this protein is DNA topoisomerase 4 subunit B.